The following is a 962-amino-acid chain: RNA-binding protein 15 (962 aa).

3 stretches are compositionally biased toward basic and acidic residues: residues 1–10, 34–52, and 59–72; these read MRSAGREPLP, LRRD…ERSP, and RGGE…ERSK. The tract at residues 1-167 is disordered; that stretch reads MRSAGREPLP…SAPGGGDGVE (167 aa). Over residues 82-94 the composition is skewed to low complexity; it reads GSSSGKTDSGGSR. Residues 97–112 are compositionally biased toward basic and acidic residues; sequence LHLDKSSSRGGSREYE. S108 is subject to Phosphoserine. Residues 118-129 show a composition bias toward low complexity; the sequence is SSSRLHSYSSPS. Residues 134 to 149 show a composition bias toward gly residues; the sequence is SGGGESRSSSRGGGGE. Residues 150–159 are compositionally biased toward low complexity; that stretch reads SRSSGAASSA. The RRM 1 domain maps to 169 to 251; sequence KTLKISELGS…RPLKIEAVYV (83 aa). S178, S207, and S209 each carry phosphoserine. K245 is covalently cross-linked (Glycyl lysine isopeptide (Lys-Gly) (interchain with G-Cter in SUMO2)). Residues S252, S256, and S258 each carry the phosphoserine modification. Residues 257 to 297 are disordered; that stretch reads RSPLDKDAYAPSSSVVGTSVGSHRHAPGGGGGQRSLSPGGA. Y265 is subject to Phosphotyrosine. The segment covering 268–277 has biased composition (low complexity); the sequence is SSSVVGTSVG. Phosphoserine is present on residues S291, S293, and S364. RRM domains lie at 373 to 450 and 454 to 528; these read RTLF…YGKA and TRLW…FADT. Glycyl lysine isopeptide (Lys-Gly) (interchain with G-Cter in SUMO2) cross-links involve residues K405, K419, and K444. Residue K449 is modified to N6-acetyllysine. Composition is skewed to basic and acidic residues over residues 553 to 580 and 612 to 661; these read GHRA…RDLY and SLDR…SERP. The interval 553-779 is disordered; sequence GHRAPDPLRS…KQDGGTAPVA (227 aa). Position 567 is a phosphothreonine (T567). Position 577 is an asymmetric dimethylarginine; alternate; by PRMT1 (R577). R577 carries the omega-N-methylarginine; alternate; by PRMT1 modification. 5 positions are modified to phosphoserine: S621, S655, S670, S674, and S701. Basic and acidic residues-rich tracts occupy residues 673–692, 701–729, and 742–751; these read RSPE…DRSS, SPVR…AERD, and NPLKKEDRSD. K745 is covalently cross-linked (Glycyl lysine isopeptide (Lys-Gly) (interchain with G-Cter in SUMO2)). Residues 754–771 show a composition bias toward low complexity; sequence APSASTSSSKQKPPSQKQ. Phosphoserine occurs at positions 768 and 782. One can recognise an SPOC domain in the interval 778–957; sequence VAASSPKLCL…YLVMIIVRAK (180 aa). The interval 866–885 is disordered; sequence GSSDSRSSSSSATSDTAAST. Over residues 867-885 the composition is skewed to low complexity; that stretch reads SSDSRSSSSSATSDTAAST. S936 carries the phosphoserine modification.

This sequence belongs to the RRM Spen family. In terms of assembly, component of the WMM complex, a N6-methyltransferase complex composed of a catalytic subcomplex, named MAC, and of an associated subcomplex, named MACOM. The MAC subcomplex is composed of METTL3 and METTL14. The MACOM subcomplex is composed of WTAP, ZC3H13, CBLL1/HAKAI, VIRMA, and, in some cases of RBM15 (RBM15 or RBM15B). Also a component of a MACOM-like complex, named WTAP complex, composed of WTAP, ZC3H13, CBLL1, VIRMA, RBM15, BCLAF1 and THRAP3. Interacts with RBPJ. Interacts (via SPOC domain) with SETD1B. Interacts with NXF1, the interaction is required to promote mRNA export. Interacts with SF3B1. Methylated at Arg-577 by PRMT1, leading to promote ubiquitination by CNOT4 and subsequent degradation by the proteasome. Post-translationally, ubiquitinated by CNOT4 following methylation at Arg-577 by PRMT1.

It is found in the nucleus speckle. It localises to the nucleus. Its subcellular location is the nucleoplasm. The protein localises to the nucleus envelope. The protein resides in the nucleus membrane. RNA-binding protein that acts as a key regulator of N6-methyladenosine (m6A) methylation of RNAs, thereby regulating different processes, such as hematopoietic cell homeostasis, alternative splicing of mRNAs and X chromosome inactivation mediated by Xist RNA. Associated component of the WMM complex, a complex that mediates N6-methyladenosine (m6A) methylation of RNAs, a modification that plays a role in the efficiency of mRNA splicing and RNA processing. Plays a key role in m6A methylation, possibly by binding target RNAs and recruiting the WMM complex. Involved in random X inactivation mediated by Xist RNA: acts by binding Xist RNA and recruiting the WMM complex, which mediates m6A methylation, leading to target YTHDC1 reader on Xist RNA and promoting transcription repression activity of Xist. Required for the development of multiple tissues, such as the maintenance of the homeostasis of long-term hematopoietic stem cells and for megakaryocyte (MK) and B-cell differentiation. Regulates megakaryocyte differentiation by regulating alternative splicing of genes important for megakaryocyte differentiation; probably regulates alternative splicing via m6A regulation. Required for placental vascular branching morphogenesis and embryonic development of the heart and spleen. Acts as a regulator of thrombopoietin response in hematopoietic stem cells by regulating alternative splicing of MPL. May also function as an mRNA export factor, stimulating export and expression of RTE-containing mRNAs which are present in many retrotransposons that require to be exported prior to splicing. High affinity binding of pre-mRNA to RBM15 may allow targeting of the mRNP to the export helicase DBP5 in a manner that is independent of splicing-mediated NXF1 deposition, resulting in export prior to splicing. May be implicated in HOX gene regulation. This Mus musculus (Mouse) protein is RNA-binding protein 15.